The following is a 368-amino-acid chain: 3-dehydroquinate synthase (368 aa).

NAD(+) contacts are provided by residues 71–76, 105–109, 129–130, Lys142, Lys151, and 169–172; these read DGEAFK, GVVGD, TT, and TLRT. Zn(2+) contacts are provided by Glu184, His247, and His264.

This sequence belongs to the sugar phosphate cyclases superfamily. Dehydroquinate synthase family. Co(2+) serves as cofactor. Zn(2+) is required as a cofactor. The cofactor is NAD(+).

The protein resides in the cytoplasm. It catalyses the reaction 7-phospho-2-dehydro-3-deoxy-D-arabino-heptonate = 3-dehydroquinate + phosphate. It functions in the pathway metabolic intermediate biosynthesis; chorismate biosynthesis; chorismate from D-erythrose 4-phosphate and phosphoenolpyruvate: step 2/7. In terms of biological role, catalyzes the conversion of 3-deoxy-D-arabino-heptulosonate 7-phosphate (DAHP) to dehydroquinate (DHQ). The protein is 3-dehydroquinate synthase of Cupriavidus pinatubonensis (strain JMP 134 / LMG 1197) (Cupriavidus necator (strain JMP 134)).